A 186-amino-acid polypeptide reads, in one-letter code: UPF0397 protein SGO_0469 (186 aa).

The next 5 membrane-spanning stretches (helical) occupy residues valine 14 to threonine 34, leucine 50 to leucine 70, glycine 77 to leucine 97, alanine 119 to isoleucine 139, and valine 152 to alanine 172.

This sequence belongs to the UPF0397 family.

Its subcellular location is the cell membrane. The polypeptide is UPF0397 protein SGO_0469 (Streptococcus gordonii (strain Challis / ATCC 35105 / BCRC 15272 / CH1 / DL1 / V288)).